A 554-amino-acid polypeptide reads, in one-letter code: Methyl-coenzyme M reductase II subunit alpha (554 aa).

Gln-151 serves as a coordination point for coenzyme F430. Residues Arg-229, 260–261 (KH), and Arg-274 contribute to the coenzyme B site. Coenzyme M contacts are provided by Tyr-336 and Tyr-447.

It belongs to the methyl-coenzyme M reductase alpha subunit family. In terms of assembly, MCR is a hexamer of two alpha, two beta, and two gamma chains, forming a dimer of heterotrimers. Coenzyme F430 is required as a cofactor.

The catalysed reaction is coenzyme B + methyl-coenzyme M = methane + coenzyme M-coenzyme B heterodisulfide. It functions in the pathway one-carbon metabolism; methyl-coenzyme M reduction; methane from methyl-coenzyme M: step 1/1. In terms of biological role, component of the methyl-coenzyme M reductase (MCR) I that catalyzes the reductive cleavage of methyl-coenzyme M (CoM-S-CH3 or 2-(methylthio)ethanesulfonate) using coenzyme B (CoB or 7-mercaptoheptanoylthreonine phosphate) as reductant which results in the production of methane and the mixed heterodisulfide of CoB and CoM (CoM-S-S-CoB). This is the final step in methanogenesis. The sequence is that of Methyl-coenzyme M reductase II subunit alpha (mrtA) from Methanothermus fervidus (strain ATCC 43054 / DSM 2088 / JCM 10308 / V24 S).